A 145-amino-acid chain; its full sequence is Cell wall synthesis protein CwsA (145 aa).

Residues 104–124 traverse the membrane as a helical segment; that stretch reads WIFAGIAAAILAGGAVAFSIV.

Belongs to the CwsA family. In terms of assembly, interacts with CrgA and Wag31.

The protein resides in the cell membrane. Its function is as follows. Required for regulated cell division, cell wall synthesis and the maintenance of cell shape. The chain is Cell wall synthesis protein CwsA from Mycobacterium tuberculosis (strain ATCC 25618 / H37Rv).